Here is a 582-residue protein sequence, read N- to C-terminus: Ubiquilin-1 (582 aa).

2 disordered regions span residues 1-26 (MAES…AEPK) and 102-136 (RPQD…AANS). Position 2 is an N-acetylalanine (alanine 2). One can recognise a Ubiquitin-like domain in the interval 28 to 102 (MKVTVKTPKE…VHLVIKTQNR (75 aa)). Over residues 102-135 (RPQDNSAQQTNTTGNSVTSSPAPDSNPTSGPAAN) the composition is skewed to polar residues. The tract at residues 169 to 422 (QLLSNPEMMV…LNNPLFAGNP (254 aa)) is interaction with UBXN4. STI1 domains follow at residues 173–201 (NPEM…QLIM) and 203–242 (NPQM…MQEM). The segment at 285 to 365 (NPFASLVSSP…NLVPGAGASM (81 aa)) is disordered. A compositionally biased stretch (polar residues) spans 290–304 (LVSSPSSAEGTQPSR). A compositionally biased stretch (low complexity) spans 318 to 346 (QTPQSSPASGSTGSTTNTVSTSAGNATST). STI1 domains are found at residues 381–428 (NPQL…QEQM) and 432–464 (LPTF…QQGL). Residues 481–513 (GLAAGNSGGPAGTTAPSTAPGEDTNPQGGAAEP) are disordered. Residues 539 to 579 (RFQQQLEQLSAMGFLNREANLQALIATGGDINAAIERLLGS) form the UBA domain.

As to quaternary structure, monomer and homodimer. Heterodimer with UBQLN2. Binds CD47. Binds NBL1. Binds GABRA1, GABRA2, GABRA3, GABRA6, GABRB1, GABRB2 and GABRB3. Binds UBE3A, BTRC, P4HB and MTOR. Interacts with the proteasome 19S subunit. Interacts (via ubiquitin-like domain) with TREX1; the interaction is direct and may control TREX1 subcellular location. Forms a complex with UBXN4 and VCP. Interacts (via UBA domain) with UBQLN4 (via ubiquitin-like domain). Found in a complex with UBQLN2 and MAP1LC3A/B/C. The monomeric form interacts with PSEN1 and PSEN2. Interacts with ORAI1. Interacts (via UBA domain) with TICAM1. Interacts with EPS15. Interacts (via UBA domain) with UBA52 and (via ubiquitin-like domain) with PSMD3 and PSMD4. Interacts with HERPUD1. Interacts with MAP1LC3A/B/C in the presence of UBQLN4. Interacts (via ubiquitin-like domain) with EPS15 (via UIM domains) and both the ubiquitinated and non-ubiquitinated forms can interact with EPS15. Interacts (via ubiquitin-like domain) with EPS15L1, HGS (via UIM domain) and STAM2 (via UIM domain). Interacts with BCL2L10/BCL-B; in the cytoplasm. Post-translationally, degraded during both macroautophagy and during chaperone-mediated autophagy (CMA). Phosphorylated. In terms of processing, ubiquitinated.

Its subcellular location is the nucleus. It is found in the cytoplasm. The protein localises to the endoplasmic reticulum. It localises to the cytoplasmic vesicle. The protein resides in the autophagosome. Its subcellular location is the cell membrane. Its function is as follows. Plays an important role in the regulation of different protein degradation mechanisms and pathways including ubiquitin-proteasome system (UPS), autophagy and endoplasmic reticulum-associated protein degradation (ERAD) pathway. Mediates the proteasomal targeting of misfolded or accumulated proteins for degradation by binding (via UBA domain) to their polyubiquitin chains and by interacting (via ubiquitin-like domain) with the subunits of the proteasome. Plays a role in the ERAD pathway via its interaction with ER-localized proteins UBXN4, VCP and HERPUD1 and may form a link between the polyubiquitinated ERAD substrates and the proteasome. Plays a role in unfolded protein response (UPR) by attenuating the induction of UPR-inducible genes, DDTI3/CHOP, HSPA5 and PDIA2 during ER stress. Involved in the regulation of macroautophagy and autophagosome formation; required for maturation of autophagy-related protein LC3 from the cytosolic form LC3-I to the membrane-bound form LC3-II and may assist in the maturation of autophagosomes to autolysosomes by mediating autophagosome-lysosome fusion. Negatively regulates the TICAM1/TRIF-dependent toll-like receptor signaling pathway by decreasing the abundance of TICAM1 via the autophagic pathway. Promotes the ubiquitination and lysosomal degradation of ORAI1, consequently down-regulating the ORAI1-mediated Ca2+ mobilization. Suppresses the maturation and proteasomal degradation of amyloid beta A4 protein (A4) by stimulating the lysine 63 (K63)-linked polyubiquitination. Delays the maturation of A4 by sequestering it in the Golgi apparatus and preventing its transport to the cell surface for subsequent processing. Promotes the surface expression of GABA-A receptors. Ubiquitinates BCL2L10 and thereby stabilizes protein abundance. This is Ubiquilin-1 (Ubqln1) from Rattus norvegicus (Rat).